The chain runs to 134 residues: Fluoride-specific ion channel FluC (134 aa).

4 consecutive transmembrane segments (helical) span residues 7-27 (LAVA…TIMA), 38-58 (GTLL…IVLV), 69-89 (LFLF…AAES), and 110-130 (VGSL…LLGH). Residues Gly77 and Thr80 each contribute to the Na(+) site.

Belongs to the fluoride channel Fluc/FEX (TC 1.A.43) family.

The protein localises to the cell inner membrane. It catalyses the reaction fluoride(in) = fluoride(out). Na(+) is not transported, but it plays an essential structural role and its presence is essential for fluoride channel function. In terms of biological role, fluoride-specific ion channel. Important for reducing fluoride concentration in the cell, thus reducing its toxicity. The chain is Fluoride-specific ion channel FluC from Legionella pneumophila (strain Paris).